Consider the following 243-residue polypeptide: HTH-type transcriptional regulator MlrA (243 aa).

The region spanning 3-72 (LYTIGEVALL…VSKVKMLLSN (70 aa)) is the HTH merR-type domain. The segment at residues 6 to 25 (IGEVALLCDINPVTLRAWQR) is a DNA-binding region (H-T-H motif).

As to quaternary structure, interacts with DgcM and PdeR.

Its activity is regulated as follows. Activity is regulated by DgcM and PdeR. In terms of biological role, activates transcription of csgD, the master regulator of biofilm formation, by binding to its promoter region. Also controls the transcription of cadC and ibaG. Part of a signaling cascade that regulates curli biosynthesis. The cascade is composed of two c-di-GMP control modules, in which c-di-GMP controlled by the DgcE/PdeH pair (module I) regulates the activity of the DgcM/PdeR pair (module II), which in turn regulates activity of the transcription factor MlrA. This Escherichia coli (strain K12) protein is HTH-type transcriptional regulator MlrA.